The following is a 359-amino-acid chain: Phosphoribosylformylglycinamidine cyclo-ligase (359 aa).

It belongs to the AIR synthase family.

Its subcellular location is the cytoplasm. It carries out the reaction 2-formamido-N(1)-(5-O-phospho-beta-D-ribosyl)acetamidine + ATP = 5-amino-1-(5-phospho-beta-D-ribosyl)imidazole + ADP + phosphate + H(+). Its pathway is purine metabolism; IMP biosynthesis via de novo pathway; 5-amino-1-(5-phospho-D-ribosyl)imidazole from N(2)-formyl-N(1)-(5-phospho-D-ribosyl)glycinamide: step 2/2. This Brucella canis (strain ATCC 23365 / NCTC 10854 / RM-666) protein is Phosphoribosylformylglycinamidine cyclo-ligase.